A 461-amino-acid polypeptide reads, in one-letter code: Homocitrate synthase (461 aa).

The 256-residue stretch at 4–259 folds into the Pyruvate carboxyltransferase domain; it reads VGILDSTLRE…IEVVKLDKLQ (256 aa). Arg-12 contributes to the 2-oxoglutarate binding site. Glu-13 provides a ligand contact to Mg(2+). 2-oxoglutarate is bound by residues His-76, Arg-136, and Thr-170. Residues His-198 and His-200 each coordinate Mg(2+). The active-site Proton acceptor is the His-292.

The protein belongs to the alpha-IPM synthase/homocitrate synthase family. Homocitrate synthase LYS20/LYS21 subfamily. Mg(2+) serves as cofactor. It depends on Mn(2+) as a cofactor.

It carries out the reaction acetyl-CoA + 2-oxoglutarate + H2O = (2R)-homocitrate + CoA + H(+). Its pathway is amino-acid biosynthesis; L-lysine biosynthesis via AAA pathway; L-alpha-aminoadipate from 2-oxoglutarate: step 1/5. In terms of biological role, catalyzes the aldol-type condensation of 2-oxoglutarate with acetyl-CoA to yield homocitrate. Carries out the first step of the alpha-aminoadipate (AAA) lysine biosynthesis pathway. In Saccharolobus islandicus (strain Y.N.15.51 / Yellowstone #2) (Sulfolobus islandicus), this protein is Homocitrate synthase.